A 683-amino-acid polypeptide reads, in one-letter code: Protein kinase C eta type (683 aa).

Residues 1–118 (MSSGTMKFNG…LRTAGTSDTF (118 aa)) form the C2 domain. A phosphoserine mark is found at Ser-28 and Ser-32. Phorbol-ester/DAG-type zinc fingers lie at residues 171–222 (GHKF…VTAC) and 245–295 (PHKF…APNC). Ser-317 carries the post-translational modification Phosphoserine. In terms of domain architecture, Protein kinase spans 355 to 614 (FEFIRVLGKG…EHEILRHPFF (260 aa)). Residues 361–369 (LGKGSFGKV) and Lys-384 each bind ATP. The active-site Proton acceptor is the Asp-479. The residue at position 513 (Thr-513) is a Phosphothreonine; by PDPK1. The 69-residue stretch at 615–683 (KEIDWVQLNH…FSYVSPELQP (69 aa)) folds into the AGC-kinase C-terminal domain. At Thr-656 the chain carries Phosphothreonine. Position 675 is a phosphoserine (Ser-675).

Belongs to the protein kinase superfamily. AGC Ser/Thr protein kinase family. PKC subfamily. Interacts with FYN. Interacts with RALA. Interacts with DGKQ.

It is found in the cytoplasm. It carries out the reaction L-seryl-[protein] + ATP = O-phospho-L-seryl-[protein] + ADP + H(+). It catalyses the reaction L-threonyl-[protein] + ATP = O-phospho-L-threonyl-[protein] + ADP + H(+). Its activity is regulated as follows. Novel PKCs (PRKCD, PRKCE, PRKCH and PRKCQ) are calcium-insensitive, but activated by diacylglycerol (DAG) and phosphatidylserine. Three specific sites; Thr-513 (activation loop of the kinase domain), Thr-656 (turn motif) and Ser-675 (hydrophobic region), need to be phosphorylated for its full activation. Calcium-independent, phospholipid- and diacylglycerol (DAG)-dependent serine/threonine-protein kinase that is involved in the regulation of cell differentiation in keratinocytes and pre-B cell receptor, mediates regulation of epithelial tight junction integrity and foam cell formation, and is required for glioblastoma proliferation and apoptosis prevention in MCF-7 cells. In keratinocytes, binds and activates the tyrosine kinase FYN, which in turn blocks epidermal growth factor receptor (EGFR) signaling and leads to keratinocyte growth arrest and differentiation. Associates with the cyclin CCNE1-CDK2-CDKN1B complex and inhibits CDK2 kinase activity, leading to RB1 dephosphorylation and thereby G1 arrest in keratinocytes. In association with RALA activates actin depolymerization, which is necessary for keratinocyte differentiation. In the pre-B cell receptor signaling, functions downstream of BLNK by up-regulating IRF4, which in turn activates L chain gene rearrangement. Regulates epithelial tight junctions (TJs) by phosphorylating occludin (OCLN) on threonine residues, which is necessary for the assembly and maintenance of TJs. In association with PLD2 and via TLR4 signaling, is involved in lipopolysaccharide (LPS)-induced RGS2 down-regulation and foam cell formation. Upon PMA stimulation, mediates glioblastoma cell proliferation by activating the mTOR pathway, the PI3K/AKT pathway and the ERK1-dependent phosphorylation of ELK1. Involved in the protection of glioblastoma cells from irradiation-induced apoptosis by preventing caspase-9 activation. In camptothecin-treated MCF-7 cells, regulates NF-kappa-B upstream signaling by activating IKBKB, and confers protection against DNA damage-induced apoptosis. Promotes oncogenic functions of ATF2 in the nucleus while blocking its apoptotic function at mitochondria. Phosphorylates ATF2 which promotes its nuclear retention and transcriptional activity and negatively regulates its mitochondrial localization. The protein is Protein kinase C eta type (Prkch) of Rattus norvegicus (Rat).